A 278-amino-acid chain; its full sequence is Sulfur carrier protein FdhD (278 aa).

Residue Cys-121 is the Cysteine persulfide intermediate of the active site. A Mo-bis(molybdopterin guanine dinucleotide)-binding site is contributed by 260–265 (FCKPGR).

This sequence belongs to the FdhD family.

Its subcellular location is the cytoplasm. Its function is as follows. Required for formate dehydrogenase (FDH) activity. Acts as a sulfur carrier protein that transfers sulfur from IscS to the molybdenum cofactor prior to its insertion into FDH. This chain is Sulfur carrier protein FdhD, found in Salmonella choleraesuis (strain SC-B67).